We begin with the raw amino-acid sequence, 42 residues long: Osteocalcin (42 aa).

In terms of domain architecture, Gla spans 1–40; the sequence is YLDHGLGAPAPYVDPLEPKREVDELADQMGFQEAYRRFYG. Pro9 is subject to 4-hydroxyproline. Glu17, Glu21, and Asp23 together coordinate Ca(2+). 4-carboxyglutamate occurs at positions 17 and 21.

The protein belongs to the osteocalcin/matrix Gla protein family. In terms of processing, gamma-carboxyglutamic acid residues are formed by vitamin K dependent carboxylation. These residues are essential for the binding of calcium.

It is found in the secreted. Its function is as follows. The carboxylated form is one of the main organic components of the bone matrix, which constitutes 1-2% of the total bone protein: it acts as a negative regulator of bone formation and is required to limit bone formation without impairing bone resorption or mineralization. The carboxylated form binds strongly to apatite and calcium. In terms of biological role, the uncarboxylated form acts as a hormone secreted by osteoblasts, which regulates different cellular processes, such as energy metabolism, male fertility and brain development. Regulates of energy metabolism by acting as a hormone favoring pancreatic beta-cell proliferation, insulin secretion and sensitivity and energy expenditure. Uncarboxylated osteocalcin hormone also promotes testosterone production in the testes: acts as a ligand for G protein-coupled receptor GPRC6A at the surface of Leydig cells, initiating a signaling response that promotes the expression of enzymes required for testosterone synthesis in a CREB-dependent manner. Also acts as a regulator of brain development: osteocalcin hormone crosses the blood-brain barrier and acts as a ligand for GPR158 on neurons, initiating a signaling response that prevents neuronal apoptosis in the hippocampus, favors the synthesis of all monoamine neurotransmitters and inhibits that of gamma-aminobutyric acid (GABA). Osteocalcin also crosses the placenta during pregnancy and maternal osteocalcin is required for fetal brain development. The protein is Osteocalcin of Camelops hesternus (Western camel).